The primary structure comprises 541 residues: Chaperonin GroEL 2 (541 aa).

Residues 29-32 (TLGP), 86-90 (DGTTT), G413, 476-478 (NAA), and D492 contribute to the ATP site.

The protein belongs to the chaperonin (HSP60) family. In terms of assembly, forms a cylinder of 14 subunits composed of two heptameric rings stacked back-to-back. Interacts with the co-chaperonin GroES.

Its subcellular location is the secreted. It localises to the capsule. The protein localises to the cell surface. It is found in the cell wall. The enzyme catalyses ATP + H2O + a folded polypeptide = ADP + phosphate + an unfolded polypeptide.. Functionally, together with its co-chaperonin GroES, plays an essential role in assisting protein folding. The GroEL-GroES system forms a nano-cage that allows encapsulation of the non-native substrate proteins and provides a physical environment optimized to promote and accelerate protein folding. This Mycolicibacterium gilvum (strain PYR-GCK) (Mycobacterium gilvum (strain PYR-GCK)) protein is Chaperonin GroEL 2.